The primary structure comprises 475 residues: MSENTVMPIVRVAVLAAGDDGGRLTEMALPSELPLREILPAVQRIVQPARENDGAADPAAAPNPVRLSLAPIGGAPFSLDATLDTVGVVDGDLLALQAVPSGPPAPRIVEDIADAAVIFSEARRRQWGPTHIARGAALALIGLILVGTGLSVAHRVITGDLLGQFIVSGIALATVIAALAVRNRSAVLATSLAVTALVPVAAAFALGVPGDFGAPNVLLAAAGVAAWSLISMAGSPDDRGIAVFTATAVTGVGVLLVAGAASLWVISSDVIGCALVLLGLIVTVQAAQLSAMWARFPLPVIPAPGDPTPAARPLSVLADLPRRVRVSQAHQTGVIAAGVLLGVAGSVALVSSANASPWAWYIVVAAAAGAALRARVWDSAACKAWLLGHSYLLAVALLVAFVIGDRYQAALWALAALAVLVLVWIVAALNPKIASPDTYSLPMRRMVGFLATGLDASLIPVMALLVGLFSLVLDR.

The next 11 helical transmembrane spans lie at 132–152 (IARG…GLSV), 161–181 (LLGQ…ALAV), 186–206 (AVLA…AFAL), 212–232 (FGAP…LISM), 241–261 (IAVF…AGAA), 264–284 (WVIS…IVTV), 333–353 (GVIA…VSSA), 354–374 (NASP…ALRA), 384–404 (AWLL…FVIG), 409–429 (AALW…VAAL), and 453–473 (GLDA…SLVL).

This sequence belongs to the EccD/Snm4 family. In terms of assembly, part of the ESX-3 / type VII secretion system (T7SS), which is composed of cytosolic and membrane components. The ESX-3 membrane complex is composed of EccB3, EccC3, EccD3 and EccE3.

The protein localises to the cell inner membrane. Its function is as follows. Part of the ESX-3 specialized secretion system, which is required for siderophore-mediated iron acquisition and for the secretion of EsxH and EsxG. This Mycolicibacterium smegmatis (strain ATCC 700084 / mc(2)155) (Mycobacterium smegmatis) protein is ESX-3 secretion system protein EccD3.